Consider the following 308-residue polypeptide: HPr kinase/phosphorylase (308 aa).

Active-site residues include histidine 138 and lysine 159. 153–160 is an ATP binding site; that stretch reads GESGLGKS. Position 160 (serine 160) interacts with Mg(2+). Catalysis depends on aspartate 177, which acts as the Proton acceptor; for phosphorylation activity. Proton donor; for dephosphorylation activity. The important for the catalytic mechanism of both phosphorylation and dephosphorylation stretch occupies residues 201 to 210; it reads LEVRGLGLLD. Glutamate 202 lines the Mg(2+) pocket. Arginine 243 is an active-site residue. An important for the catalytic mechanism of dephosphorylation region spans residues 264-269; that stretch reads QVAAGR.

Belongs to the HPrK/P family. In terms of assembly, homohexamer. Requires Mg(2+) as cofactor.

It catalyses the reaction [HPr protein]-L-serine + ATP = [HPr protein]-O-phospho-L-serine + ADP + H(+). It carries out the reaction [HPr protein]-O-phospho-L-serine + phosphate + H(+) = [HPr protein]-L-serine + diphosphate. Functionally, catalyzes the ATP- as well as the pyrophosphate-dependent phosphorylation of a specific serine residue in HPr, a phosphocarrier protein of the phosphoenolpyruvate-dependent sugar phosphotransferase system (PTS). HprK/P also catalyzes the pyrophosphate-producing, inorganic phosphate-dependent dephosphorylation (phosphorolysis) of seryl-phosphorylated HPr (P-Ser-HPr). This is HPr kinase/phosphorylase from Bordetella petrii (strain ATCC BAA-461 / DSM 12804 / CCUG 43448).